A 333-amino-acid polypeptide reads, in one-letter code: Leucine carboxyl methyltransferase 1 (333 aa).

Residues arginine 79, glycine 108, aspartate 131, 180–181 (NV), and glutamate 206 contribute to the S-adenosyl-L-methionine site.

This sequence belongs to the methyltransferase superfamily. LCMT family.

The enzyme catalyses [phosphatase 2A protein]-C-terminal L-leucine + S-adenosyl-L-methionine = [phosphatase 2A protein]-C-terminal L-leucine methyl ester + S-adenosyl-L-homocysteine. Functionally, methylates the carboxyl group of the C-terminal leucine residue of protein phosphatase 2A catalytic subunits to form alpha-leucine ester residues. This Kluyveromyces lactis (strain ATCC 8585 / CBS 2359 / DSM 70799 / NBRC 1267 / NRRL Y-1140 / WM37) (Yeast) protein is Leucine carboxyl methyltransferase 1 (PPM1).